A 545-amino-acid chain; its full sequence is Chaperonin GroEL (545 aa).

ATP contacts are provided by residues 29 to 32 (TLGP), Lys-50, 86 to 90 (DGTTT), Gly-415, and Asp-495.

This sequence belongs to the chaperonin (HSP60) family. In terms of assembly, forms a cylinder of 14 subunits composed of two heptameric rings stacked back-to-back. Interacts with the co-chaperonin GroES.

Its subcellular location is the cytoplasm. The enzyme catalyses ATP + H2O + a folded polypeptide = ADP + phosphate + an unfolded polypeptide.. Its function is as follows. Together with its co-chaperonin GroES, plays an essential role in assisting protein folding. The GroEL-GroES system forms a nano-cage that allows encapsulation of the non-native substrate proteins and provides a physical environment optimized to promote and accelerate protein folding. The polypeptide is Chaperonin GroEL (Bacteroides thetaiotaomicron (strain ATCC 29148 / DSM 2079 / JCM 5827 / CCUG 10774 / NCTC 10582 / VPI-5482 / E50)).